We begin with the raw amino-acid sequence, 288 residues long: ATP synthase gamma chain (288 aa).

It belongs to the ATPase gamma chain family. In terms of assembly, F-type ATPases have 2 components, CF(1) - the catalytic core - and CF(0) - the membrane proton channel. CF(1) has five subunits: alpha(3), beta(3), gamma(1), delta(1), epsilon(1). CF(0) has three main subunits: a, b and c.

The protein localises to the cell inner membrane. In terms of biological role, produces ATP from ADP in the presence of a proton gradient across the membrane. The gamma chain is believed to be important in regulating ATPase activity and the flow of protons through the CF(0) complex. The protein is ATP synthase gamma chain of Aliivibrio fischeri (strain ATCC 700601 / ES114) (Vibrio fischeri).